A 240-amino-acid polypeptide reads, in one-letter code: Uridylate kinase (240 aa).

12 to 15 lines the ATP pocket; it reads KLSG. The interval 20–25 is involved in allosteric activation by GTP; sequence GDKGFG. UMP is bound at residue G54. Positions 55 and 59 each coordinate ATP. Residues D74 and 135–142 each bind UMP; that span reads TGSPYFST. The ATP site is built by N163, Y169, and D172.

The protein belongs to the UMP kinase family. As to quaternary structure, homohexamer.

It is found in the cytoplasm. It catalyses the reaction UMP + ATP = UDP + ADP. The protein operates within pyrimidine metabolism; CTP biosynthesis via de novo pathway; UDP from UMP (UMPK route): step 1/1. Its activity is regulated as follows. Allosterically activated by GTP. Inhibited by UTP. Functionally, catalyzes the reversible phosphorylation of UMP to UDP. This is Uridylate kinase from Levilactobacillus brevis (strain ATCC 367 / BCRC 12310 / CIP 105137 / JCM 1170 / LMG 11437 / NCIMB 947 / NCTC 947) (Lactobacillus brevis).